The following is a 59-amino-acid chain: Dybowskin-1CDYa (59 aa).

Positions M1–C22 are cleaved as a signal peptide. A propeptide spanning residues E23–E44 is cleaved from the precursor.

This sequence belongs to the frog skin active peptide (FSAP) family. Brevinin subfamily. As to expression, expressed by the skin glands.

The protein localises to the secreted. In terms of biological role, antimicrobial peptide. Has activity against the Gram-positive bacterium S.aureus (MIC=6 uM) and the Gram-negative bacterium E.coli (MIC=3 uM). Lacks hemolytic activity against human erythrocytes. The protein is Dybowskin-1CDYa of Rana dybowskii (Dybovsky's frog).